The following is a 100-amino-acid chain: Large ribosomal subunit protein eL30 (100 aa).

The protein belongs to the eukaryotic ribosomal protein eL30 family.

The polypeptide is Large ribosomal subunit protein eL30 (rpl30e) (Aeropyrum pernix (strain ATCC 700893 / DSM 11879 / JCM 9820 / NBRC 100138 / K1)).